We begin with the raw amino-acid sequence, 216 residues long: Probable nicotinate-nucleotide adenylyltransferase (216 aa).

This sequence belongs to the NadD family.

The enzyme catalyses nicotinate beta-D-ribonucleotide + ATP + H(+) = deamido-NAD(+) + diphosphate. It functions in the pathway cofactor biosynthesis; NAD(+) biosynthesis; deamido-NAD(+) from nicotinate D-ribonucleotide: step 1/1. In terms of biological role, catalyzes the reversible adenylation of nicotinate mononucleotide (NaMN) to nicotinic acid adenine dinucleotide (NaAD). This chain is Probable nicotinate-nucleotide adenylyltransferase, found in Geobacillus thermodenitrificans (strain NG80-2).